Reading from the N-terminus, the 100-residue chain is Urease subunit gamma (100 aa).

This sequence belongs to the urease gamma subunit family. In terms of assembly, heterotrimer of UreA (gamma), UreB (beta) and UreC (alpha) subunits. Three heterotrimers associate to form the active enzyme.

Its subcellular location is the cytoplasm. It carries out the reaction urea + 2 H2O + H(+) = hydrogencarbonate + 2 NH4(+). Its pathway is nitrogen metabolism; urea degradation; CO(2) and NH(3) from urea (urease route): step 1/1. The chain is Urease subunit gamma from Polynucleobacter asymbioticus (strain DSM 18221 / CIP 109841 / QLW-P1DMWA-1) (Polynucleobacter necessarius subsp. asymbioticus).